Consider the following 230-residue polypeptide: Probable cytokinin riboside 5'-monophosphate phosphoribohydrolase LOG4 (230 aa).

Substrate is bound by residues E91, 109-110 (RK), and 126-132 (GYGTIEE).

It belongs to the LOG family.

It carries out the reaction N(6)-(dimethylallyl)adenosine 5'-phosphate + H2O = N(6)-dimethylallyladenine + D-ribose 5-phosphate. The enzyme catalyses 9-ribosyl-trans-zeatin 5'-phosphate + H2O = trans-zeatin + D-ribose 5-phosphate. In terms of biological role, cytokinin-activating enzyme working in the direct activation pathway. Phosphoribohydrolase that converts inactive cytokinin nucleotides to the biologically active free-base forms. This Oryza sativa subsp. japonica (Rice) protein is Probable cytokinin riboside 5'-monophosphate phosphoribohydrolase LOG4 (LOGL4).